The following is a 403-amino-acid chain: Ribosomal RNA large subunit methyltransferase I (403 aa).

The PUA domain maps to 9-88; the sequence is YPRLVLSKGR…EPVDIAFFTR (80 aa).

The protein belongs to the methyltransferase superfamily. RlmI family.

It localises to the cytoplasm. It carries out the reaction cytidine(1962) in 23S rRNA + S-adenosyl-L-methionine = 5-methylcytidine(1962) in 23S rRNA + S-adenosyl-L-homocysteine + H(+). Specifically methylates the cytosine at position 1962 (m5C1962) of 23S rRNA. In Salmonella arizonae (strain ATCC BAA-731 / CDC346-86 / RSK2980), this protein is Ribosomal RNA large subunit methyltransferase I.